We begin with the raw amino-acid sequence, 346 residues long: Holliday junction branch migration complex subunit RuvB (346 aa).

Positions 4–185 are large ATPase domain (RuvB-L); that stretch reads SDRIITASPF…FGIVSRLEFY (182 aa). ATP is bound by residues L24, R25, G66, K69, T70, T71, 132–134, R175, Y185, and R222; that span reads EDY. T70 lines the Mg(2+) pocket. The segment at 186 to 256 is small ATPAse domain (RuvB-S); the sequence is TSDELSKIVT…VADAALQMLD (71 aa). The segment at 259–346 is head domain (RuvB-H); sequence AAGLDVLDRK…AATPGLFNPD (88 aa). Residues R295, R314, and R319 each contribute to the DNA site.

Belongs to the RuvB family. Homohexamer. Forms an RuvA(8)-RuvB(12)-Holliday junction (HJ) complex. HJ DNA is sandwiched between 2 RuvA tetramers; dsDNA enters through RuvA and exits via RuvB. An RuvB hexamer assembles on each DNA strand where it exits the tetramer. Each RuvB hexamer is contacted by two RuvA subunits (via domain III) on 2 adjacent RuvB subunits; this complex drives branch migration. In the full resolvosome a probable DNA-RuvA(4)-RuvB(12)-RuvC(2) complex forms which resolves the HJ.

The protein resides in the cytoplasm. The catalysed reaction is ATP + H2O = ADP + phosphate + H(+). The RuvA-RuvB-RuvC complex processes Holliday junction (HJ) DNA during genetic recombination and DNA repair, while the RuvA-RuvB complex plays an important role in the rescue of blocked DNA replication forks via replication fork reversal (RFR). RuvA specifically binds to HJ cruciform DNA, conferring on it an open structure. The RuvB hexamer acts as an ATP-dependent pump, pulling dsDNA into and through the RuvAB complex. RuvB forms 2 homohexamers on either side of HJ DNA bound by 1 or 2 RuvA tetramers; 4 subunits per hexamer contact DNA at a time. Coordinated motions by a converter formed by DNA-disengaged RuvB subunits stimulates ATP hydrolysis and nucleotide exchange. Immobilization of the converter enables RuvB to convert the ATP-contained energy into a lever motion, pulling 2 nucleotides of DNA out of the RuvA tetramer per ATP hydrolyzed, thus driving DNA branch migration. The RuvB motors rotate together with the DNA substrate, which together with the progressing nucleotide cycle form the mechanistic basis for DNA recombination by continuous HJ branch migration. Branch migration allows RuvC to scan DNA until it finds its consensus sequence, where it cleaves and resolves cruciform DNA. The chain is Holliday junction branch migration complex subunit RuvB from Nitrosomonas eutropha (strain DSM 101675 / C91 / Nm57).